The primary structure comprises 688 residues: Glycine--tRNA ligase beta subunit (688 aa).

The protein belongs to the class-II aminoacyl-tRNA synthetase family. As to quaternary structure, tetramer of two alpha and two beta subunits.

The protein localises to the cytoplasm. The enzyme catalyses tRNA(Gly) + glycine + ATP = glycyl-tRNA(Gly) + AMP + diphosphate. This chain is Glycine--tRNA ligase beta subunit, found in Listeria monocytogenes serotype 4a (strain HCC23).